Here is a 584-residue protein sequence, read N- to C-terminus: Pectinesterase 1 (584 aa).

The N-terminal stretch at 1–42 (MTHIKEFFTKLSESSSNQNISNIPKKKKKLFLALFATLLVVA) is a signal peptide. N-linked (GlcNAc...) asparagine glycosylation is found at Asn108, Asn129, and Asn226. Substrate is bound by residues Thr348 and Gln378. Residue Asp401 is the Proton donor of the active site. Cys415 and Cys435 form a disulfide bridge. Asp422 (nucleophile) is an active-site residue. The substrate site is built by Arg490 and Trp492.

It in the N-terminal section; belongs to the PMEI family. The protein in the C-terminal section; belongs to the pectinesterase family. Expressed at high levels in flower buds, shoots and young leaves, and at lower levels in young fruit, young bark and juice vesicles. Not expressed at significant levels in leaf abscission zones following ethylene treatment or in mature leaves. In fruit abscission zones, expression was initially undetectable but increased markedly following ethylene treatment.

It is found in the secreted. It localises to the cell wall. The catalysed reaction is [(1-&gt;4)-alpha-D-galacturonosyl methyl ester](n) + n H2O = [(1-&gt;4)-alpha-D-galacturonosyl](n) + n methanol + n H(+). The protein operates within glycan metabolism; pectin degradation; 2-dehydro-3-deoxy-D-gluconate from pectin: step 1/5. Functionally, acts in the modification of cell walls via demethylesterification of cell wall pectin. This Citrus sinensis (Sweet orange) protein is Pectinesterase 1 (PECS-1.1).